A 161-amino-acid polypeptide reads, in one-letter code: MSWLPKSPKARRRLMLVAAIAPVLAVAAGLTLWGLSDSISFFYTPSQAEAARPAPGRSIQLGGLVAAGSVVKHPDGRVEFTVADQDAEDRVLFQGDLPDLFREGQGVVAIGAFREDGVFEAKRVLAKHDERYMPREVSKALKEQGEWYGDGQRPEHQGDAL.

At 1–13 (MSWLPKSPKARRR) the chain is on the cytoplasmic side. The helical; Signal-anchor for type II membrane protein transmembrane segment at 14 to 34 (LMLVAAIAPVLAVAAGLTLWG) threads the bilayer. Residues 35-161 (LSDSISFFYT…QRPEHQGDAL (127 aa)) are Periplasmic-facing. Positions 128 and 132 each coordinate heme.

The protein belongs to the CcmE/CycJ family.

It localises to the cell inner membrane. Its function is as follows. Heme chaperone required for the biogenesis of c-type cytochromes. Transiently binds heme delivered by CcmC and transfers the heme to apo-cytochromes in a process facilitated by CcmF and CcmH. This Phenylobacterium zucineum (strain HLK1) protein is Cytochrome c-type biogenesis protein CcmE.